Consider the following 335-residue polypeptide: Replication factor C subunit 4 (335 aa).

56 to 63 contributes to the ATP binding site; that stretch reads SGPPGTGK.

The protein belongs to the activator 1 small subunits family. As to quaternary structure, heterotetramer of subunits RFC2, RFC3, RFC4 and RFC5 that can form a complex with RFC1. In terms of tissue distribution, expressed in roots, leaves, shoot apical meristem (SAM), flag leaves and panicles.

The protein localises to the nucleus. In terms of biological role, may be involved in DNA replication and thus regulate cell proliferation. The polypeptide is Replication factor C subunit 4 (RFC4) (Oryza sativa subsp. japonica (Rice)).